Here is a 228-residue protein sequence, read N- to C-terminus: Enolase-phosphatase E1 (228 aa).

The protein belongs to the HAD-like hydrolase superfamily. MasA/MtnC family. In terms of assembly, monomer. It depends on Mg(2+) as a cofactor.

It carries out the reaction 5-methylsulfanyl-2,3-dioxopentyl phosphate + H2O = 1,2-dihydroxy-5-(methylsulfanyl)pent-1-en-3-one + phosphate. It functions in the pathway amino-acid biosynthesis; L-methionine biosynthesis via salvage pathway; L-methionine from S-methyl-5-thio-alpha-D-ribose 1-phosphate: step 3/6. Its pathway is amino-acid biosynthesis; L-methionine biosynthesis via salvage pathway; L-methionine from S-methyl-5-thio-alpha-D-ribose 1-phosphate: step 4/6. Its function is as follows. Bifunctional enzyme that catalyzes the enolization of 2,3-diketo-5-methylthiopentyl-1-phosphate (DK-MTP-1-P) into the intermediate 2-hydroxy-3-keto-5-methylthiopentenyl-1-phosphate (HK-MTPenyl-1-P), which is then dephosphorylated to form the acireductone 1,2-dihydroxy-3-keto-5-methylthiopentene (DHK-MTPene). The chain is Enolase-phosphatase E1 from Picosynechococcus sp. (strain ATCC 27264 / PCC 7002 / PR-6) (Agmenellum quadruplicatum).